A 360-amino-acid polypeptide reads, in one-letter code: Biotin synthase (360 aa).

Positions 83–315 (FCGKYFDLCT…KSFLRYCGGR (233 aa)) constitute a Radical SAM core domain. [4Fe-4S] cluster is bound by residues Cys101, Cys105, and Cys108. [2Fe-2S] cluster contacts are provided by Ser145, Cys180, Cys240, and Arg310.

This sequence belongs to the radical SAM superfamily. Biotin synthase family. In terms of assembly, homodimer. [4Fe-4S] cluster serves as cofactor. Requires [2Fe-2S] cluster as cofactor.

It catalyses the reaction (4R,5S)-dethiobiotin + (sulfur carrier)-SH + 2 reduced [2Fe-2S]-[ferredoxin] + 2 S-adenosyl-L-methionine = (sulfur carrier)-H + biotin + 2 5'-deoxyadenosine + 2 L-methionine + 2 oxidized [2Fe-2S]-[ferredoxin]. The protein operates within cofactor biosynthesis; biotin biosynthesis; biotin from 7,8-diaminononanoate: step 2/2. Catalyzes the conversion of dethiobiotin (DTB) to biotin by the insertion of a sulfur atom into dethiobiotin via a radical-based mechanism. This Fusobacterium nucleatum subsp. nucleatum (strain ATCC 25586 / DSM 15643 / BCRC 10681 / CIP 101130 / JCM 8532 / KCTC 2640 / LMG 13131 / VPI 4355) protein is Biotin synthase.